A 306-amino-acid chain; its full sequence is Serine/threonine-protein phosphatase PP2A-2 catalytic subunit (306 aa).

Mn(2+) is bound by residues aspartate 54, histidine 56, aspartate 82, and asparagine 114. Catalysis depends on histidine 115, which acts as the Proton donor. Residues histidine 164 and histidine 238 each coordinate Mn(2+). Leucine 306 is modified (leucine methyl ester).

Belongs to the PPP phosphatase family. PP-2A subfamily. In terms of assembly, PP2A consists of a common heterodimeric core enzyme, composed of a 36 kDa catalytic subunit (subunit C) and a 65 kDa constant regulatory subunit (subunit A), that associates with a variety of regulatory subunits such as subunits B (the R2/B/PR55/B55, R3/B''/PR72/PR130/PR59 and R5/B'/B56 families). Interacts with B'THETA. Interacts with HDA14. Interacts with SRK2E/OST1. Interacts with TAP46. Mn(2+) is required as a cofactor. In terms of processing, reversibly methyl esterified on Leu-306 by leucine carboxyl methyltransferase 1 (LCMT1) and pectin methylesterase 1 (PME1). Carboxyl methylation influences the affinity of the catalytic subunit for the different regulatory subunits, thereby modulating the PP2A holoenzyme's substrate specificity, enzyme activity and cellular localization. Phosphorylation of either threonine (by autophosphorylation-activated protein kinase) or tyrosine results in inactivation of the phosphatase. Auto-dephosphorylation has been suggested as a mechanism for reactivation. In terms of tissue distribution, expressed in root meristem, emerging lateral roots, leaf vasculature, stipules, guard cells, anthers and pollen grains.

It is found in the cytoplasm. Its subcellular location is the cytosol. The protein localises to the nucleus. It localises to the peroxisome. It catalyses the reaction O-phospho-L-seryl-[protein] + H2O = L-seryl-[protein] + phosphate. It carries out the reaction O-phospho-L-threonyl-[protein] + H2O = L-threonyl-[protein] + phosphate. Dephosphorylates and activates the actin-depolymerizing factor ADF1, which, in turn, regulates actin cytoskeleton remodeling and is involved in the blue light photoreceptor PHOT2-mediated chloroplast avoidance movements. Associates with the serine/threonine-protein phosphatase PP2A regulatory subunits A and B' to positively regulates beta-oxidation of fatty acids and protoauxins in peroxisomes by dephosphorylating peroxisomal beta-oxidation-related proteins. Acts as a negative regulator of abscisic acid (ABA) signaling. May regulate ABA-dependent gene expression. Involved in the light-dependent activation of nitrate reductase. This Arabidopsis thaliana (Mouse-ear cress) protein is Serine/threonine-protein phosphatase PP2A-2 catalytic subunit.